The primary structure comprises 442 residues: N-acetyl-S-alkylcysteine sulfoxide monooxygenase (442 aa).

FMN is bound by residues D58, T95, H145, Y149, S219, and S220.

The protein belongs to the NtaA/SnaA/DszA monooxygenase family. Homodimer.

It catalyses the reaction (R)-N-acetyl-S-benzyl-L-cysteine sulfoxide + FMNH2 + O2 = N-acetyl-S-hydroxy-L-cysteine + benzaldehyde + FMN + H2O + H(+). It functions in the pathway amino-acid metabolism. Its function is as follows. Involved in a cysteine salvage pathway from S-alkylcysteine. Catalyzes the C-S bond cleavage in N-acetyl-S-benzyl-L-cysteine sulfoxide leading to N-acetyl-S-hydroxy-L-cysteine and benzaldehyde. This pathway is likely important in the catabolism of alkylated cysteine generated by proteolysis of alkylated glutathione formed in the detoxification of a wide range of electrophiles. Has much less efficient activity with N-acetyl-S-methyl-L-cysteine sulfoxide as substrate. Cannot use S-alkylated L-cysteine sulfones and ketone analogs as substrates, demonstrating that the sulfoxide is required for activity. This chain is N-acetyl-S-alkylcysteine sulfoxide monooxygenase, found in Bacillus subtilis (strain 168).